The following is a 384-amino-acid chain: Aryl-alcohol dehydrogenase GME11368 (384 aa).

Asp69 contacts NADP(+). The Proton donor role is filled by Tyr74. Residues 177 to 178 (SD), Gln203, and 301 to 309 (RKPEHLKAN) each bind NADP(+).

This sequence belongs to the aldo/keto reductase family. Aldo/keto reductase 2 subfamily.

It participates in secondary metabolite biosynthesis. In terms of biological role, aryl-alcohol dehydrogenase; part of the gene cluster that mediates the biosynthesis of dibenzodioxocinones such as pestalotiollide B, a novel class of inhibitors against cholesterol ester transfer protein (CEPT). The biosynthesis initiates from condensation of acetate and malonate units catalyzed by the non-reducing PKS pks8/GME11356. Pks8/GME11356 lacks a thioesterase (TE) domain, which is important to the cyclizing of the third ring of atrochrysone carboxylic acid, and the esterase GME11355 might play the role of TE and catalyzes the cyclization reaction of the C ring. The lactamase-like protein GME11357 (or other beta-lactamases in Pestalotiopsis microspora) probably hydrolyzes the thioester bond between the ACP of pks8/GME11356 and the intermediate to release atrochrysone carboxylic acid, which is spontaneously dehydrates to form endocrocin anthrone. Endocrocin anthrone is further converted to emodin via the endocrocin intermediate. Emodin is then oxidized by several enzymes such as the Baeyer-Villiger oxidase GME11358, the oxidoreductase GME11367, the short chain dehydrogenase/reductase GME11373, as well as by other oxidoreductases from the cluster, to modify the A and C rings and open the B ring, and finally yield monodictyphenone. The prenyltransferase GME11375 may catalyze the addition reaction between the C5 side chains and the carbon bone of dibenzodioxocinones. The remaining biochemical reactions to the final product dibenzodioxocinones should be methylation catalyzed by methyltransferase GME11366 and reduction and lactonization reaction catalyzed by a series of oxidordeuctases. This chain is Aryl-alcohol dehydrogenase GME11368, found in Pestalotiopsis microspora.